A 230-amino-acid chain; its full sequence is MKKKKALPSLLYLVFIVLLPWGVSSSFNKCLELWIKNWWNTRQSETLLTDIQEKRILERFIELEELSLLDEMIKGKLKTHVQKPPTGIHKEIIQWVKINNEDHLHTILHFSTNIICLAILSGSFFLGKEELVILNSWVQEFFYNLNDSIKAFFILLVTDFFVGFHSTRGWELVIRWVYNDFGWAPNELIFTIFVCSFPVILDTCLKFWVFFCLNRLSPSLVVIYHSISEA.

4 helical membrane-spanning segments follow: residues 7-27 (LPSL…SSSF), 107-127 (ILHF…FFLG), 145-165 (LNDS…VGFH), and 181-201 (FGWA…PVIL).

The protein belongs to the CemA family.

The protein resides in the plastid. The protein localises to the chloroplast inner membrane. The catalysed reaction is K(+)(in) + H(+)(out) = K(+)(out) + H(+)(in). Its function is as follows. Contributes to K(+)/H(+) antiport activity by supporting proton efflux to control proton extrusion and homeostasis in chloroplasts in a light-dependent manner to modulate photosynthesis. Prevents excessive induction of non-photochemical quenching (NPQ) under continuous-light conditions. Indirectly promotes efficient inorganic carbon uptake into chloroplasts. The chain is Potassium/proton antiporter CemA from Triticum aestivum (Wheat).